The following is a 316-amino-acid chain: Phosphoglycerate mutase-like protein AT74 (316 aa).

H17 serves as the catalytic Tele-phosphohistidine intermediate. The active-site Proton donor/acceptor is E106. The tract at residues 275-316 (KECETEATEDREEEEEEEGKRVNLLTSSEYSNEPELYNGQCC) is disordered. Residues 279 to 291 (TEATEDREEEEEE) show a composition bias toward acidic residues.

This sequence belongs to the phosphoglycerate mutase family. As to expression, expressed in roots, leaves, stems, flowers and siliques.

Phosphoglycerate mutase-like protein lacking PGM activity. May play a role in carbohydrates metabolism. This is Phosphoglycerate mutase-like protein AT74 from Arabidopsis thaliana (Mouse-ear cress).